A 160-amino-acid polypeptide reads, in one-letter code: MTSNLTHLNEKGEAHMVDVGGKAVTKRTARARSYVNMTAETLAVVANGDVAKGDVFATARIAGIQAAKKCADLIPLCHPLMLTRVTVDITIEANANRLCIEAQCELDGKTGVEMEALTACSVAALTVYDMCKALDKGIVISDTRLISKTGGKSGDWFYSE.

Substrate is bound by residues 76 to 78 (LCH) and 114 to 115 (ME). Residue Asp129 is part of the active site.

Belongs to the MoaC family. In terms of assembly, homohexamer; trimer of dimers.

The enzyme catalyses (8S)-3',8-cyclo-7,8-dihydroguanosine 5'-triphosphate = cyclic pyranopterin phosphate + diphosphate. Its pathway is cofactor biosynthesis; molybdopterin biosynthesis. Its function is as follows. Catalyzes the conversion of (8S)-3',8-cyclo-7,8-dihydroguanosine 5'-triphosphate to cyclic pyranopterin monophosphate (cPMP). This is Cyclic pyranopterin monophosphate synthase from Saccharophagus degradans (strain 2-40 / ATCC 43961 / DSM 17024).